A 439-amino-acid polypeptide reads, in one-letter code: Adenylosuccinate synthetase (439 aa).

Residues 25-31 (GDEGKGK), 53-55 (GHT), and lysine 62 contribute to the GTP site. Aspartate 26 (proton acceptor) is an active-site residue. Mg(2+) contacts are provided by aspartate 26 and glycine 53. IMP-binding positions include 26–29 (DEGK) and 51–54 (NAGH). Histidine 54 functions as the Proton donor in the catalytic mechanism. Threonine 141, arginine 155, asparagine 232, and threonine 247 together coordinate IMP. Threonine 307 lines the GTP pocket. 307 to 313 (TTTKRPR) is a substrate binding site. Arginine 311 serves as a coordination point for IMP. Residues arginine 313, 339–341 (KLD), and 425–427 (GVG) contribute to the GTP site.

The protein belongs to the adenylosuccinate synthetase family. As to quaternary structure, homodimer. The cofactor is Mg(2+).

The protein localises to the cytoplasm. The enzyme catalyses IMP + L-aspartate + GTP = N(6)-(1,2-dicarboxyethyl)-AMP + GDP + phosphate + 2 H(+). It participates in purine metabolism; AMP biosynthesis via de novo pathway; AMP from IMP: step 1/2. Its function is as follows. Plays an important role in the salvage pathway for purine nucleotide biosynthesis. Catalyzes the first commited step in the biosynthesis of AMP from IMP. This Plasmodium berghei (strain Anka) protein is Adenylosuccinate synthetase (ADSS).